We begin with the raw amino-acid sequence, 308 residues long: Glucan 1,3-beta-glucosidase (308 aa).

An N-terminal signal peptide occupies residues 1 to 18; the sequence is MQIKFLTTLATVLTSVAA. E119 serves as the catalytic Proton donor. N-linked (GlcNAc...) asparagine glycosylation is present at N197. Residue E228 is the Nucleophile of the active site.

It belongs to the glycosyl hydrolase 17 family.

It localises to the secreted. Its subcellular location is the cell wall. The catalysed reaction is Successive hydrolysis of beta-D-glucose units from the non-reducing ends of (1-&gt;3)-beta-D-glucans, releasing alpha-glucose.. This chain is Glucan 1,3-beta-glucosidase (BGL2), found in Candida albicans (Yeast).